The primary structure comprises 662 residues: ABC transporter G family member 17 (662 aa).

The 255-residue stretch at 22-276 (LAFNDLTYNV…FSEFGSPIPE (255 aa)) folds into the ABC transporter domain. Residue 69–76 (GASGAGKS) coordinates ATP. One can recognise an ABC transmembrane type-2 domain in the interval 356-566 (VETVILAKRY…PYEAVLHNEF (211 aa)). The next 6 membrane-spanning stretches (helical) occupy residues 375 to 395 (LIGT…TVYW), 410 to 430 (FFSF…PAFI), 451 to 471 (VISH…GFAA), 486 to 508 (FIYY…TFVS), 514 to 536 (VMMS…GFYV), and 635 to 655 (LWVT…SLLL).

The protein belongs to the ABC transporter superfamily. ABCG family. Eye pigment precursor importer (TC 3.A.1.204) subfamily.

It is found in the membrane. In Arabidopsis thaliana (Mouse-ear cress), this protein is ABC transporter G family member 17 (ABCG17).